We begin with the raw amino-acid sequence, 451 residues long: Subtilase-type proteinase psp3 (451 aa).

The N-terminal stretch at 1-20 (MRVSWISGLLLVAHLAPSSA) is a signal peptide. The region spanning 80 to 161 (YIVMFKPSVD…LVEPDRVMHV (82 aa)) is the Inhibitor I9 domain. One can recognise a Peptidase S8 domain in the interval 169–451 (PWGLARVSHR…PNVLAFNNYE (283 aa)). Catalysis depends on charge relay system residues D205, H237, and S394.

This sequence belongs to the peptidase S8 family.

This Schizosaccharomyces pombe (strain 972 / ATCC 24843) (Fission yeast) protein is Subtilase-type proteinase psp3 (psp3).